We begin with the raw amino-acid sequence, 701 residues long: CRS2-associated factor 1, chloroplastic (701 aa).

A chloroplast-targeting transit peptide spans 1–37; it reads MSLKLNTPFPIFAPSLFPNHNPRAPSEIRFSRWGNAN. Disordered stretches follow at residues 68–136 and 191–221; these read VHTH…PEVK and LPQS…QKPG. 2 CRM domains span residues 241 to 337 and 359 to 455; these read EPLT…TRPR and EGLT…LTTP. The disordered stretch occupies residues 471-532; it reads LPEDDEPSVS…SLQSWSTKDV (62 aa). Polar residues-rich tracts occupy residues 479–492 and 520–530; these read VSPN…QNPP and TINSLQSWSTK. The segment at 564–586 is CRS2 binding; sequence RVLILMKQAVESGTALVLDAADL.

As to quaternary structure, interacts with CRS2 and RNA. Part of large ribonucleo-protein complexes that include group IIB introns, CRS2 and CAF1.

The protein localises to the plastid. The protein resides in the chloroplast stroma. Functionally, required for the splicing of group IIB introns in chloroplasts. Forms splicing particles with CRS2. Interacts with RNA and confers intron specificity of the splicing particles. This is CRS2-associated factor 1, chloroplastic from Arabidopsis thaliana (Mouse-ear cress).